The following is a 623-amino-acid chain: GATA zinc finger domain-containing protein 6 (623 aa).

Disordered regions lie at residues 137–156, 167–197, and 245–289; these read IISPPQQSQQPPPPTSGNNF, INNNSNNNNNNNNCKSYKKQQTSKGSATAST, and PTTT…TAST. Positions 167–179 are enriched in low complexity; that stretch reads INNNSNNNNNNNN. Polar residues predominate over residues 185–197; that stretch reads KQQTSKGSATAST. Residues 320–345 form a GATA-type zinc finger; it reads CHSCGETQTSQWRRGPDGCKSLCNAC. The interval 398–509 is disordered; it reads IQQQQQKDDH…SINHNDKLIN (112 aa). A compositionally biased stretch (low complexity) spans 410-482; the sequence is LSRPSSFSSQ…TSPTISSESL (73 aa). Polar residues predominate over residues 483–502; that stretch reads NFSSATNTPTNLSPNLQSIN.

The chain is GATA zinc finger domain-containing protein 6 (gtaF) from Dictyostelium discoideum (Social amoeba).